Here is a 130-residue protein sequence, read N- to C-terminus: MSKPRIALIAHDAKKDEIVALAGQYRAVLAQCRLVATGTTGGRIAAAHGLEVERKLSGPLGGDLQIGAELADGRVDVVVFLRDPMTAQPHDPDITALVRACDVHNVPVATNVATARMLLDDLARTMQDVC.

One can recognise an MGS-like domain in the interval 1–130 (MSKPRIALIA…DLARTMQDVC (130 aa)). Substrate contacts are provided by residues H11, K15, 37–40 (TGTT), and 57–58 (SG). Catalysis depends on D63, which acts as the Proton donor/acceptor. Substrate is bound at residue H90.

Belongs to the methylglyoxal synthase family.

It catalyses the reaction dihydroxyacetone phosphate = methylglyoxal + phosphate. In terms of biological role, catalyzes the formation of methylglyoxal from dihydroxyacetone phosphate. The polypeptide is Methylglyoxal synthase (Burkholderia multivorans (strain ATCC 17616 / 249)).